The sequence spans 594 residues: RING finger protein 207 (594 aa).

The RING-type zinc-finger motif lies at 25 to 64 (CPLCHAQYERPCLLDCFHDFCAGCLRGRTADGRVACPLCQ). The segment at 93 to 145 (VEAVHCANCDLDCSKQDAETACFCNTCGQPLCARCRDETHRARMFARHDIVAL) adopts a B box-type; atypical zinc-finger fold. The Zn(2+) site is built by Cys98, Cys101, Cys127, and His132. Positions 369–400 (NTLAGGSGPKVLMGPSCPSPVRKVSRSPVQKP) are disordered. Residues 424-458 (CRHYEDSYRGLQAEVQNLKDQVQELHRDLTKHHSL) adopt a coiled-coil conformation. Residues 552-594 (FQASADDESENPQTAYDASRNGETPASLLLPGSVASAEPPFVN) form a disordered region. Over residues 562–575 (NPQTAYDASRNGET) the composition is skewed to polar residues.

As to quaternary structure, interacts with the core-glycosylated, but not the fully glycosylated form of KCNH2/HERG. Interacts with DNAJA1 and HSPA8. Interacts (via the C-terminus) with HSPA1A; this interaction additively increases KCNH2 expression.

It is found in the cytoplasm. Functionally, plays a role in cardiac repolarization possibly by stabilizing membrane expression of the potassium channel KCNH2/HERG, or by assisting its synthesis, folding or export from the endoplasmic reticulum, in a heat shock protein-dependent manner. In Oryctolagus cuniculus (Rabbit), this protein is RING finger protein 207 (RNF207).